A 437-amino-acid chain; its full sequence is MYGNNNKKSINITSMFQNLIPEGSDIFSRRCIWVNGPVIVGAGPSGLAVAAGLKREGVPFIILERANCIASLWQNRTYDRLKLHLPKQFCQLPNYPFPDEFPEYPTKFQFIQYLESYAANFDINPKFNETVQSAKYDETFGLWRVKTISNMGQLGSCEFEYICRWIVVATGENAEKVVPDFEGLEDFGGDVLHAGDYKSGGRYQGKKVLVVGCGNSGMEVSLDLYNHGANPSMVVRSAVHVLPREIFGKSTFELGVTMMKYMPVWLADKTILFLARIILGNTDKYGLKRPKIGPLELKNKEGKTPVLDIGALPKIRSGKIKIVPGIIKFGKGKVELIDGRVLEIDSVILATGYRSNVPSWLKDNDFFSDDGIPKNPFPNGWKGEAGLYAVGFTRKGLFGASLDAMSVAHDIANRWKEESKQQKKTAAARHRRCISHF.

Residue 41–46 coordinates FAD; the sequence is GAGPSG. 212–217 contacts NADP(+); that stretch reads GCGNSG.

The protein belongs to the FMO family. FAD serves as cofactor.

The catalysed reaction is indole-3-pyruvate + NADPH + O2 + H(+) = (indol-3-yl)acetate + CO2 + NADP(+) + H2O. It functions in the pathway plant hormone metabolism; auxin biosynthesis. Involved in auxin biosynthesis. Belongs to the set of redundant YUCCA genes probably responsible for auxin biosynthesis in roots. The protein is Probable indole-3-pyruvate monooxygenase YUCCA3 (YUC3) of Arabidopsis thaliana (Mouse-ear cress).